A 211-amino-acid chain; its full sequence is Thiamine-phosphate synthase (211 aa).

Residues 37–41 (QLRIK) and N69 contribute to the 4-amino-2-methyl-5-(diphosphooxymethyl)pyrimidine site. The Mg(2+) site is built by D70 and D89. S108 is a binding site for 4-amino-2-methyl-5-(diphosphooxymethyl)pyrimidine. A 2-[(2R,5Z)-2-carboxy-4-methylthiazol-5(2H)-ylidene]ethyl phosphate-binding site is contributed by 134–136 (TQT). K137 contributes to the 4-amino-2-methyl-5-(diphosphooxymethyl)pyrimidine binding site. Residues G166 and 186–187 (VS) contribute to the 2-[(2R,5Z)-2-carboxy-4-methylthiazol-5(2H)-ylidene]ethyl phosphate site.

Belongs to the thiamine-phosphate synthase family. Mg(2+) is required as a cofactor.

The catalysed reaction is 2-[(2R,5Z)-2-carboxy-4-methylthiazol-5(2H)-ylidene]ethyl phosphate + 4-amino-2-methyl-5-(diphosphooxymethyl)pyrimidine + 2 H(+) = thiamine phosphate + CO2 + diphosphate. The enzyme catalyses 2-(2-carboxy-4-methylthiazol-5-yl)ethyl phosphate + 4-amino-2-methyl-5-(diphosphooxymethyl)pyrimidine + 2 H(+) = thiamine phosphate + CO2 + diphosphate. It catalyses the reaction 4-methyl-5-(2-phosphooxyethyl)-thiazole + 4-amino-2-methyl-5-(diphosphooxymethyl)pyrimidine + H(+) = thiamine phosphate + diphosphate. The protein operates within cofactor biosynthesis; thiamine diphosphate biosynthesis; thiamine phosphate from 4-amino-2-methyl-5-diphosphomethylpyrimidine and 4-methyl-5-(2-phosphoethyl)-thiazole: step 1/1. Functionally, condenses 4-methyl-5-(beta-hydroxyethyl)thiazole monophosphate (THZ-P) and 2-methyl-4-amino-5-hydroxymethyl pyrimidine pyrophosphate (HMP-PP) to form thiamine monophosphate (TMP). In Enterobacter sp. (strain 638), this protein is Thiamine-phosphate synthase.